A 173-amino-acid polypeptide reads, in one-letter code: MERKLSQRAGNTFKGFTLVEVLITLAIISLVFSLILISFQRATFFTFGAKKEAERLKSEALLFWELQRSLAGAKKLKINQGKELFLITSGGSLYRGVVKKGFIHKDGWLYLYEFPYPSGSIDFYEEEKLVKLAKLDDFKVFALDSLGKHENYEGLPPFVIVELNSKEFTFKVR.

The propeptide at 1 to 15 is leader sequence; sequence MERKLSQRAGNTFKG. Phenylalanine 16 carries the N-methylphenylalanine modification. A helical transmembrane segment spans residues 16-37; it reads FTLVEVLITLAIISLVFSLILI.

It localises to the membrane. This is an uncharacterized protein from Aquifex aeolicus (strain VF5).